Here is a 526-residue protein sequence, read N- to C-terminus: MELKTEEEEVGGVQPVSIQAFASSSTLHGLAHIFSYERLSLKRALWALCFLGSLAVLLCVCTERVQYYFCYHHVTKLDEVAASQLTFPAVTLCNLNEFRFSQVSKNDLYHAGELLALLNNRYEIPDTQMADEKQLEILQDKANFRSFKPKPFNMREFYDRAGHDIRDMLLSCHFRGEACSAEDFKVVFTRYGKCYTFNSGQDGRPRLKTMKGGTGNGLEIMLDIQQDEYLPVWGETDETSFEAGIKVQIHSQDEPPFIDQLGFGVAPGFQTFVSCQEQRLIYLPSPWGTCNAVTMDSDFFDSYSITACRIDCETRYLVENCNCRMVHMPGDAPYCTPEQYKECADPALDFLVEKDQEYCVCEMPCNLTRYGKELSMVKIPSKASAKYLAKKFNKSEQYIGENILVLDIFFEVLNYETIEQKKAYEIAGLLGDIGGQMGLFIGASILTVLELFDYAYEVIKHRLCRRGKCQKEAKRSSADKGVALSLDDVKRHNPCESLRGHPAGMTYAANILPHHPARGTFEDFTC.

Topologically, residues 1 to 49 (MELKTEEEEVGGVQPVSIQAFASSSTLHGLAHIFSYERLSLKRALWALC) are cytoplasmic. A helical membrane pass occupies residues 50–66 (FLGSLAVLLCVCTERVQ). The Extracellular portion of the chain corresponds to 67 to 425 (YYFCYHHVTK…ETIEQKKAYE (359 aa)). Cystine bridges form between C93/C194, C172/C179, C290/C365, C308/C361, C312/C359, C321/C343, and C323/C335. N-linked (GlcNAc...) asparagine glycosylation is found at N366 and N393. Residues 426-456 (IAGLLGDIGGQMGLFIGASILTVLELFDYAY) form a discontinuously helical membrane-spanning segment. The short motif at 442–444 (GAS) is the GAS motif; ion selectivity filter element. The Cytoplasmic portion of the chain corresponds to 457-526 (EVIKHRLCRR…ARGTFEDFTC (70 aa)). Phosphoserine is present on residues S477 and S497.

The protein belongs to the amiloride-sensitive sodium channel (TC 1.A.6) family. ASIC1 subfamily. As to quaternary structure, homotrimer. Heterotrimer; with other ASIC proteins producing channel with different properties. Interacts with PICK1; regulates ASIC1 clustering in membranes. Interacts with STOM; alters heterotrimeric ASIC channels activity. In terms of processing, pH-gating could be regulated by serine proteases. Phosphorylation by PKA regulates interaction with PICK1 and subcellular localization. Phosphorylation by PKC may regulate the channel. In terms of tissue distribution, expressed in dorsal root ganglia and sciatic nerve (at protein level). Widely distributed throughout the brain. Expressed in olfactory bulb, neo and allocortical regions, dentate granule cells, pyramidal cells of CA1-CA3 subfields of the hippocampal formation, habenula, basolateral amygdaloid nuclei, and in the Purkinje and granule cells of the cerebellum. Diffusely detected over most other regions of the basal ganglia, including thalamic nuclei, substantia nigra, striatum and globus pallidus, hypothalamus, midbrain, pons, medulla and choroid plexus. As to expression, expressed only in dorsal root ganglion (DRG). Expressed exclusively in trigeminal ganglion and dorsal root ganglion.

The protein resides in the cell membrane. It localises to the postsynaptic cell membrane. It is found in the cell projection. The protein localises to the dendrite. It carries out the reaction Na(+)(in) = Na(+)(out). The catalysed reaction is Li(+)(in) = Li(+)(out). The enzyme catalyses K(+)(in) = K(+)(out). It catalyses the reaction Ca(2+)(in) = Ca(2+)(out). It carries out the reaction H(+)(in) = H(+)(out). With respect to regulation, inhibited by the diuretic drug amiloride. External calcium is required to potentiate proton activation of ASIC1 at physiological concentrations, but at higher, non-physiological concentrations, it inhibits activation. Also potentiated by other multivalent cations like Mg(2+), Ba(2+). Activated by FMRFamide-related neuropeptides. Inhibited by anti-inflammatory drugs like salicylic acid. The spider venom psalmotoxin-1 specifically inhibits the ASIC1 homotrimer. The snake venom mambalgin-1, mambalgin-2 and mambalgin-3 inhibit the homotrimer of Asic1a (ASIC1 isoform 1). The snake venom mambalgin-1 and mambalgin-2 inhibit heterotrimers of Asic1a-Asic1b (ASIC1 isoform 1-ASIC1 isoform 3). Heterotrimer of Asic1a-Asic2a is inhibited by the snake venom mambalgin-1, mambalgin-2 and mambalgin-3. Heterotrimer of Asic1a-Asic2b is inhibited by the snake venom mambalgin-1 and mambalgin-2. The spider venom Pi-theraphotoxin-Hm3a inhibits the homotrimer of Asic1a (ASIC1 isoform 1). The spider venom Pi-theraphotoxin-Hm3a inhibits heterotrimers of Asic1a-Asic1b (ASIC1 isoform 1-ASIC1 isoform 3). The spider venom Pi-hexatoxin-Hi1a inhibits the ASIC1 homotrimer. Its activity is regulated as follows. Not inhibited by extracellular calcium. Its function is as follows. Forms voltage-independent, pH-gated trimeric sodium channels that act as postsynaptic excitatory receptors in the nervous system, playing a crucial role in regulating synaptic plasticity, learning, and memory. Upon extracellular pH drop this channel elicits transient, fast activating, and completely desensitizing inward currents. Displays high selectivity for sodium ions but can also permit the permeation of other cations. Regulates more or less directly intracellular calcium concentration and CaMKII phosphorylation, and thereby the density of dendritic spines. Modulates neuronal activity in the circuits underlying innate fear. Functionally, permeable to other cations including calcium, lithium and potassium. PH activation and steady-state inactivation are shifted to more acidic values. Forms channels that are not permeable to calcium as it discrimates stronger between monovalent cations. In terms of biological role, has no pH-gated sodium channel activity per se but can associate with other ASICs and regulate their pH-sensitivity. In Rattus norvegicus (Rat), this protein is Acid-sensing ion channel 1.